A 238-amino-acid polypeptide reads, in one-letter code: LexA repressor (238 aa).

The segment at residues F26–T46 is a DNA-binding region (H-T-H motif). Residues S159 and K197 each act as for autocatalytic cleavage activity in the active site.

The protein belongs to the peptidase S24 family. In terms of assembly, homodimer.

The catalysed reaction is Hydrolysis of Ala-|-Gly bond in repressor LexA.. Its function is as follows. Represses a number of genes involved in the response to DNA damage (SOS response), including recA and lexA. In the presence of single-stranded DNA, RecA interacts with LexA causing an autocatalytic cleavage which disrupts the DNA-binding part of LexA, leading to derepression of the SOS regulon and eventually DNA repair. The sequence is that of LexA repressor from Rhodobacter capsulatus (Rhodopseudomonas capsulata).